A 181-amino-acid polypeptide reads, in one-letter code: Probable cobalt-precorrin-6B C(15)-methyltransferase (decarboxylating) (181 aa).

S-adenosyl-L-methionine is bound by residues threonine 16, 40 to 44 (GCGSG), aspartate 61, and alanine 89.

It belongs to the methyltransferase superfamily. Archaeal-type CbiT family.

It carries out the reaction Co-precorrin-6B + S-adenosyl-L-methionine = Co-precorrin-7 + S-adenosyl-L-homocysteine + CO2. The protein operates within cofactor biosynthesis; adenosylcobalamin biosynthesis; cob(II)yrinate a,c-diamide from sirohydrochlorin (anaerobic route): step 8/10. Functionally, catalyzes the methylation of C-15 in cobalt-precorrin-6B followed by the decarboxylation of C-12 to form cobalt-precorrin-7. The sequence is that of Probable cobalt-precorrin-6B C(15)-methyltransferase (decarboxylating) from Methanococcus maripaludis (strain DSM 14266 / JCM 13030 / NBRC 101832 / S2 / LL).